Here is a 164-residue protein sequence, read N- to C-terminus: S-ribosylhomocysteine lyase (164 aa).

Residues H54, H58, and C128 each contribute to the Fe cation site.

Belongs to the LuxS family. Homodimer. Requires Fe cation as cofactor.

It carries out the reaction S-(5-deoxy-D-ribos-5-yl)-L-homocysteine = (S)-4,5-dihydroxypentane-2,3-dione + L-homocysteine. Its function is as follows. Involved in the synthesis of autoinducer 2 (AI-2) which is secreted by bacteria and is used to communicate both the cell density and the metabolic potential of the environment. The regulation of gene expression in response to changes in cell density is called quorum sensing. Catalyzes the transformation of S-ribosylhomocysteine (RHC) to homocysteine (HC) and 4,5-dihydroxy-2,3-pentadione (DPD). The protein is S-ribosylhomocysteine lyase of Campylobacter hominis (strain ATCC BAA-381 / DSM 21671 / CCUG 45161 / LMG 19568 / NCTC 13146 / CH001A).